The chain runs to 630 residues: 1-deoxy-D-xylulose-5-phosphate synthase (630 aa).

Residues His-72 and 113-115 (GHS) contribute to the thiamine diphosphate site. Mg(2+) is bound at residue Asp-144. Thiamine diphosphate-binding positions include 145-146 (GA), Asn-173, Tyr-284, and Glu-367. Mg(2+) is bound at residue Asn-173.

Belongs to the transketolase family. DXPS subfamily. Homodimer. Mg(2+) is required as a cofactor. The cofactor is thiamine diphosphate.

It carries out the reaction D-glyceraldehyde 3-phosphate + pyruvate + H(+) = 1-deoxy-D-xylulose 5-phosphate + CO2. Its pathway is metabolic intermediate biosynthesis; 1-deoxy-D-xylulose 5-phosphate biosynthesis; 1-deoxy-D-xylulose 5-phosphate from D-glyceraldehyde 3-phosphate and pyruvate: step 1/1. In terms of biological role, catalyzes the acyloin condensation reaction between C atoms 2 and 3 of pyruvate and glyceraldehyde 3-phosphate to yield 1-deoxy-D-xylulose-5-phosphate (DXP). This chain is 1-deoxy-D-xylulose-5-phosphate synthase, found in Bacillus cereus (strain AH820).